We begin with the raw amino-acid sequence, 353 residues long: Quinolinate synthase (353 aa).

Iminosuccinate contacts are provided by His-47 and Ser-68. A [4Fe-4S] cluster-binding site is contributed by Cys-113. Iminosuccinate-binding positions include 139 to 141 and Ser-156; that span reads YAN. Position 200 (Cys-200) interacts with [4Fe-4S] cluster. Residues 226 to 228 and Thr-243 each bind iminosuccinate; that span reads HPE. Cys-297 contacts [4Fe-4S] cluster.

It belongs to the quinolinate synthase family. Type 1 subfamily. Requires [4Fe-4S] cluster as cofactor.

Its subcellular location is the cytoplasm. The catalysed reaction is iminosuccinate + dihydroxyacetone phosphate = quinolinate + phosphate + 2 H2O + H(+). Its pathway is cofactor biosynthesis; NAD(+) biosynthesis; quinolinate from iminoaspartate: step 1/1. Catalyzes the condensation of iminoaspartate with dihydroxyacetone phosphate to form quinolinate. This chain is Quinolinate synthase, found in Erwinia tasmaniensis (strain DSM 17950 / CFBP 7177 / CIP 109463 / NCPPB 4357 / Et1/99).